Here is a 150-residue protein sequence, read N- to C-terminus: Nitric oxide reductase subunit C (150 aa).

The helical; Signal-anchor transmembrane segment at 13-29 threads the bilayer; the sequence is IFYGGSLFFFLLFAALT. Cys-62, Cys-65, and His-66 together coordinate heme c.

In terms of assembly, heterodimer of cytochromes b (large subunit) and c (small subunit).

The protein localises to the cell membrane. In terms of biological role, component of the anaerobic respiratory chain that transforms nitrate to dinitrogen (denitrification). The polypeptide is Nitric oxide reductase subunit C (norC) (Halomonas halodenitrificans (Paracoccus halodenitrificans)).